Consider the following 121-residue polypeptide: Small ribosomal subunit protein uS13 (121 aa).

Positions 89-121 are disordered; sequence MRHRRGLPVRGQHTKNNARTRKGKAVSIAGKKK.

Belongs to the universal ribosomal protein uS13 family. Part of the 30S ribosomal subunit. Forms a loose heterodimer with protein S19. Forms two bridges to the 50S subunit in the 70S ribosome.

Functionally, located at the top of the head of the 30S subunit, it contacts several helices of the 16S rRNA. In the 70S ribosome it contacts the 23S rRNA (bridge B1a) and protein L5 of the 50S subunit (bridge B1b), connecting the 2 subunits; these bridges are implicated in subunit movement. Contacts the tRNAs in the A and P-sites. The chain is Small ribosomal subunit protein uS13 from Levilactobacillus brevis (strain ATCC 367 / BCRC 12310 / CIP 105137 / JCM 1170 / LMG 11437 / NCIMB 947 / NCTC 947) (Lactobacillus brevis).